The chain runs to 1203 residues: DNA-directed RNA polymerase subunit beta' (1203 aa).

The Zn(2+) site is built by cysteine 60, cysteine 62, cysteine 75, and cysteine 78. Mg(2+)-binding residues include aspartate 449, aspartate 451, and aspartate 453. Zn(2+) contacts are provided by cysteine 818, cysteine 892, cysteine 899, and cysteine 902.

The protein belongs to the RNA polymerase beta' chain family. The RNAP catalytic core consists of 2 alpha, 1 beta, 1 beta' and 1 omega subunit. When a sigma factor is associated with the core the holoenzyme is formed, which can initiate transcription. Mg(2+) is required as a cofactor. The cofactor is Zn(2+).

It carries out the reaction RNA(n) + a ribonucleoside 5'-triphosphate = RNA(n+1) + diphosphate. Its function is as follows. DNA-dependent RNA polymerase catalyzes the transcription of DNA into RNA using the four ribonucleoside triphosphates as substrates. In Bacillus mycoides (strain KBAB4) (Bacillus weihenstephanensis), this protein is DNA-directed RNA polymerase subunit beta'.